The sequence spans 360 residues: Protein phosphatase 1L (360 aa).

Over 1-25 the chain is Extracellular; that stretch reads MIEDTMTLLSLLGRIMRYFLLRPET. Residues 26-42 form a helical membrane-spanning segment; the sequence is LFLLCISLALWSYFFHT. Residues 43-360 are Cytoplasmic-facing; it reads DEVKTIVKSS…FRNSSKTEEQ (318 aa). The PPM-type phosphatase domain occupies 92-351; sequence NVAVYSIQGR…DNITVMVVKF (260 aa). 4 residues coordinate Mn(2+): aspartate 128, glycine 129, aspartate 302, and aspartate 342.

It belongs to the PP2C family. As to quaternary structure, interacts with MAP3K7/TAK1. Interacts with MAP3K5. Mg(2+) serves as cofactor. It depends on Mn(2+) as a cofactor. In terms of tissue distribution, ubiquitous. Highly expressed in heart, placenta, lung, liver, kidney and pancreas.

The protein localises to the membrane. It carries out the reaction O-phospho-L-seryl-[protein] + H2O = L-seryl-[protein] + phosphate. The enzyme catalyses O-phospho-L-threonyl-[protein] + H2O = L-threonyl-[protein] + phosphate. Acts as a suppressor of the SAPK signaling pathways by associating with and dephosphorylating MAP3K7/TAK1 and MAP3K5, and by attenuating the association between MAP3K7/TAK1 and MAP2K4 or MAP2K6. This is Protein phosphatase 1L (PPM1L) from Homo sapiens (Human).